Here is a 506-residue protein sequence, read N- to C-terminus: MLKPLWKAAVAPTWPCSMPPRRPWDREAGTLQVLGALAVLWLGSVALICLLWQVPRPPTWGQVQPKDVPRSWEHGSSPAWEPLEAEARQQRDSCQLVLVESIPQDLPSAAGSPSAQPLGQAWLQLLDTAQESVHVASYYWSLTGPDIGVNDSSSQLGEALLQKLQQLLGRNISLAVATSSPTLARTSTDLQVLAARGAHVRQVPMGRLTRGVLHSKFWVVDGRHIYMGSANMDWRSLTQVKELGAVIYNCSHLAQDLEKTFQTYWVLGVPKAVLPKTWPQNFSSHFNRFQPFHGLFDGVPTTAYFSASPPALCPQGRTRDLEALLAVMGSAQEFIYASVMEYFPTTRFSHPPRYWPVLDNALRAAAFGKGVRVRLLVGCGLNTDPTMFPYLRSLQALSNPAANVSVDVKVFIVPVGNHSNIPFSRVNHSKFMVTEKAAYIGTSNWSEDYFSSTAGVGLVVTQSPGAQPAGATVQEQLRQLFERDWSSRYAVGLDGQAPGQDCVWQG.

Residues 31 to 51 (LQVLGALAVLWLGSVALICLL) form a helical membrane-spanning segment. Cysteines 94 and 250 form a disulfide. N-linked (GlcNAc...) asparagine glycosylation is found at N150 and N171. A PLD phosphodiesterase 1 domain is found at 209–236 (TRGVLHSKFWVVDGRHIYMGSANMDWRS). H214 functions as the Proton donor in the catalytic mechanism. Active-site residues include K216 and D221. 5 N-linked (GlcNAc...) asparagine glycosylation sites follow: N249, N281, N403, N417, and N427. The cysteines at positions 379 and 502 are disulfide-linked. In terms of domain architecture, PLD phosphodiesterase 2 spans 423-449 (FSRVNHSKFMVTEKAAYIGTSNWSEDY). Catalysis depends on H428, which acts as the Nucleophile. N444 carries N-linked (GlcNAc...) asparagine glycosylation.

It belongs to the phospholipase D family. In terms of assembly, homodimer. Post-translationally, highly N-glycosylated. In terms of tissue distribution, expressed in plasmacytoid dendritic cells and monocytes (at protein level).

The protein resides in the endoplasmic reticulum membrane. Its subcellular location is the golgi apparatus. The protein localises to the trans-Golgi network membrane. It localises to the nucleus. It is found in the early endosome. The protein resides in the cytoplasmic vesicle. Its subcellular location is the phagosome. The protein localises to the lysosome. The catalysed reaction is Exonucleolytic cleavage in the 5'- to 3'-direction to yield nucleoside 3'-phosphates.. It catalyses the reaction a 5'-end 5'-dephospho-ribonucleotidyl-ribonucleotide-RNA + H2O = a ribonucleoside 3'-phosphate + a 5'-end dephospho-ribonucleoside-RNA + H(+). It carries out the reaction a ribonucleoside 3'-phosphate-2'-3'-cyclophospho-GMP + H2O = a ribonucleoside 3'-phosphate + 2',3'-cyclophospho-GMP + H(+). The enzyme catalyses a 5'-end 5'-dephospho-2'-deoxyribonucleotidyl-2'-deoxyribonucleotide in single-stranded DNA + H2O = a 5'-end dephospho-2'-deoxyribonucleoside in single-stranded DNA + a 2'-deoxyribonucleoside 3'-phosphate + H(+). The catalysed reaction is a 5'-end 5'-phospho-2'-deoxyribonucleotide in single-stranded DNA + H2O = a 5'-end 5'-dephospho-2'-deoxyribonucleotide in single-stranded DNA + phosphate. It catalyses the reaction a 3-lyso-sn-glycero-1-phospho-(3'-acyl-1'-sn-glycerol) + a 1-acyl-sn-glycerol = a 3-acyl-sn-glycero-1-phospho-(3'-acyl-1'-sn-glycerol) + glycerol. It carries out the reaction 3-lyso-sn-glycero-1-phospho-(3'-(9Z-octadecenoyl)-1'-sn-glycerol) + 1-(9Z-octadecenoyl)-sn-glycerol = 3-(9Z-octadecenoyl)-sn-glycero-1-phospho-(3'-(9Z-octadecenoyl)-1'-sn-glycerol) + glycerol. The exonuclease activity toward ssDNA substrate is Ca(2+) and Mg(2+)-independent, but it is inhibited by Fe(2+), Cu(2+) and to a lesser extent Zn(2+) ions. In terms of biological role, 5'-&gt;3' exonuclease that hydrolyzes the phosphodiester bond of single-stranded DNA (ssDNA) and RNA molecules to form nucleoside 3'-monophosphates and 5'-end 5'-hydroxy deoxyribonucleotide/ribonucleotide fragments. Partially redundant with PLD3, can cleave all four nucleotides displaying higher efficiency for ssDNA and RNA fragments initiated with uridine and guanosine residues and lower efficiency for cytidine-initiated substrates. As a result, it does not always degrade polynucleotides to the single nucleotide level, it can stall at specific sites sparing certain fragments from exonucleolytic degradation. Processes self and pathogenic ssDNA and RNA molecules that reach the endolysosomal compartment via phagocytosis or autophagy and may serve as 'danger' signals for recognition by innate immune receptors such as toll-like receptors (TLRs). Degrades mitochondrial CpG-rich ssDNA fragments to prevent TLR9 activation and autoinflammatory response, but it can cleave viral RNA to generate ligands for TLR7 activation and initiate antiviral immune responses. In plasmacytoid dendritic cells, it cooperates with endonuclease RNASET2 to release 2',3'-cyclic guanosine monophosphate (2',3'-cGMP), a potent stimulatory ligand for TLR7. Produces 2',3'-cGMPs and cytidine-rich RNA fragments that occupy TLR7 ligand-binding pockets and trigger a signaling-competent state. Can exert polynucleotide phosphatase activity toward 5'-phosphorylated ssDNA substrates although at a slow rate. Transphosphatidylase that catalyzes the exchange with R to S stereo-inversion of the glycerol moiety between (S,R)-lysophosphatidylglycerol (LPG) and monoacylglycerol (MAG) substrates to yield (S,S)-bis(monoacylglycero)phosphate (BMP). Can synthesize a variety of (S,S)-BMPs representing the main phospholipid constituent of lysosomal intralumenal vesicle (ILV) membranes that bind acid hydrolases for lipid degradation. Regulates the homeostasis and interorganellar communication of the endolysosomal system with an overall impact on cellular removal of dysfunctional organelles via autophagy as well as proper protein and lipid turnover. May play a role in myotube formation in response to ER stress. The chain is 5'-3' exonuclease PLD4 from Homo sapiens (Human).